Here is a 183-residue protein sequence, read N- to C-terminus: Apo-citrate lyase phosphoribosyl-dephospho-CoA transferase (183 aa).

It belongs to the CitX family.

It catalyses the reaction apo-[citrate lyase ACP] + 2'-(5''-triphospho-alpha-D-ribosyl)-3'-dephospho-CoA = holo-[citrate lyase ACP] + diphosphate. In terms of biological role, transfers 2-(5''-triphosphoribosyl)-3'-dephosphocoenzyme-A on a serine residue to the apo-acyl carrier protein (gamma chain) of the citrate lyase to yield holo-acyl carrier protein. The protein is Apo-citrate lyase phosphoribosyl-dephospho-CoA transferase of Escherichia coli O7:K1 (strain IAI39 / ExPEC).